The following is a 368-amino-acid chain: Spermidine/putrescine import ATP-binding protein PotA (368 aa).

Residues 8–238 (IELRGVTKNF…PANLYVARFV (231 aa)) form the ABC transporter domain. 40-47 (GPSGCGKT) serves as a coordination point for ATP.

The protein belongs to the ABC transporter superfamily. Spermidine/putrescine importer (TC 3.A.1.11.1) family. In terms of assembly, the complex is composed of two ATP-binding proteins (PotA), two transmembrane proteins (PotB and PotC) and a solute-binding protein (PotD).

It is found in the cell inner membrane. It catalyses the reaction ATP + H2O + polyamine-[polyamine-binding protein]Side 1 = ADP + phosphate + polyamineSide 2 + [polyamine-binding protein]Side 1.. In terms of biological role, part of the ABC transporter complex PotABCD involved in spermidine/putrescine import. Responsible for energy coupling to the transport system. This chain is Spermidine/putrescine import ATP-binding protein PotA, found in Nitratidesulfovibrio vulgaris (strain ATCC 29579 / DSM 644 / CCUG 34227 / NCIMB 8303 / VKM B-1760 / Hildenborough) (Desulfovibrio vulgaris).